The sequence spans 233 residues: Large ribosomal subunit protein uL1 (233 aa).

Belongs to the universal ribosomal protein uL1 family. In terms of assembly, part of the 50S ribosomal subunit.

Its function is as follows. Binds directly to 23S rRNA. The L1 stalk is quite mobile in the ribosome, and is involved in E site tRNA release. Protein L1 is also a translational repressor protein, it controls the translation of the L11 operon by binding to its mRNA. The chain is Large ribosomal subunit protein uL1 from Shewanella sp. (strain MR-4).